Here is a 565-residue protein sequence, read N- to C-terminus: Small ribosomal subunit protein bS1 (565 aa).

S1 motif domains follow at residues 30–96 (SSVI…LSRD), 114–180 (NEKV…VSRR), 201–269 (GQVI…LGMK), 286–356 (NARF…LGLK), 373–443 (GSTV…LGVK), and 454–529 (GDVK…VSIK).

The protein belongs to the bacterial ribosomal protein bS1 family. In terms of processing, the initiator methionine may be removed.

Functionally, binds mRNA; thus facilitating recognition of the initiation point. It is needed to translate mRNA with a short Shine-Dalgarno (SD) purine-rich sequence. This is Small ribosomal subunit protein bS1 (rpsA) from Rhodopseudomonas palustris (strain ATCC BAA-98 / CGA009).